A 231-amino-acid polypeptide reads, in one-letter code: Glutathione-specific gamma-glutamylcyclotransferase (231 aa).

49 to 54 provides a ligand contact to substrate; sequence IFGYGS. Glu-127 functions as the Proton acceptor in the catalytic mechanism.

It belongs to the gamma-glutamylcyclotransferase family. ChaC subfamily.

The enzyme catalyses glutathione = L-cysteinylglycine + 5-oxo-L-proline. Catalyzes the cleavage of glutathione into 5-oxo-L-proline and a Cys-Gly dipeptide. Acts specifically on glutathione, but not on other gamma-glutamyl peptides. The polypeptide is Glutathione-specific gamma-glutamylcyclotransferase (Escherichia coli (strain K12)).